The following is a 280-amino-acid chain: Lysosome-associated membrane glycoprotein 5 (280 aa).

An N-terminal signal peptide occupies residues 1-29 (MDLQGRGVPSIDRLRVLLMLFHTMAQIMA). At 30–235 (EQEVENLSGL…PVDEREQLEE (206 aa)) the chain is on the extracellular side. N-linked (GlcNAc...) asparagine glycans are attached at residues N35, N53, and N127. The chain crosses the membrane as a helical span at residues 236-256 (TLPLILGLILGLVIMVTLAIY). The Cytoplasmic portion of the chain corresponds to 257-280 (HVHHKMTANQVQIPRDRSQYKHMG).

This sequence belongs to the LAMP family. Post-translationally, glycosylated. In terms of tissue distribution, expressed in plasmocytoid dendritic cells. Expressed in suprabasal skin keratinocytes and squamous cells (at protein level). Expressed in the brain and weakly in spleen and skin. Expressed in plasmocytoid dendritic cells.

The protein localises to the cell membrane. It is found in the cytoplasmic vesicle. Its subcellular location is the secretory vesicle. The protein resides in the synaptic vesicle membrane. It localises to the endoplasmic reticulum-Golgi intermediate compartment membrane. The protein localises to the endosome membrane. It is found in the cytoplasmic vesicle membrane. Its subcellular location is the cell projection. The protein resides in the dendrite. It localises to the growth cone membrane. The protein localises to the early endosome membrane. It is found in the recycling endosome. Its function is as follows. Plays a role in short-term synaptic plasticity in a subset of GABAergic neurons in the brain. This Homo sapiens (Human) protein is Lysosome-associated membrane glycoprotein 5 (LAMP5).